The primary structure comprises 170 residues: Neurotensin/neuromedin N (170 aa).

The N-terminal stretch at 1–23 (MMAGMKIQLVCMLLLAFSSWSLC) is a signal peptide. Q151 is modified (pyrrolidone carboxylic acid).

Belongs to the neurotensin family. Interacts with NTSR1. Interacts with SORT1. Interacts with SORL1. In terms of processing, neurotensin is cleaved and degraded by Angiotensin-converting enzyme (ACE) and neprilysin (MME).

It localises to the secreted. The protein resides in the cytoplasmic vesicle. It is found in the secretory vesicle. Neurotensin may play an endocrine or paracrine role in the regulation of fat metabolism. It causes contraction of smooth muscle. The chain is Neurotensin/neuromedin N (NTS) from Homo sapiens (Human).